Reading from the N-terminus, the 140-residue chain is Large ribosomal subunit protein uL11 (140 aa).

It belongs to the universal ribosomal protein uL11 family. Part of the ribosomal stalk of the 50S ribosomal subunit. Interacts with L10 and the large rRNA to form the base of the stalk. L10 forms an elongated spine to which L12 dimers bind in a sequential fashion forming a multimeric L10(L12)X complex. In terms of processing, one or more lysine residues are methylated.

Forms part of the ribosomal stalk which helps the ribosome interact with GTP-bound translation factors. The sequence is that of Large ribosomal subunit protein uL11 from Staphylococcus aureus (strain bovine RF122 / ET3-1).